Consider the following 500-residue polypeptide: Recombining binding protein suppressor of hairless (500 aa).

Residues 1–30 (MDHTEGSPAEEPPAHAPSPGKFGERPPPKR) are disordered. DNA-binding stretches follow at residues 57-67 (QKSYGNEKRFF) and 165-170 (SKPSKK). K175 carries the N6-acetyllysine modification. Residues 192–197 (RLRSQT) are DNA-binding. The IPT/TIG domain occupies 355 to 445 (PVVESLQLNG…YSTSLTFTYT (91 aa)). The segment covering 465-481 (SSQVPPNESNTNSEGSY) has biased composition (polar residues). The segment at 465-500 (SSQVPPNESNTNSEGSYTNASTNSTSVTSSTATVVS) is disordered. The segment covering 482 to 500 (TNASTNSTSVTSSTATVVS) has biased composition (low complexity).

This sequence belongs to the Su(H) family. As to quaternary structure, interacts with activated NOTCH1, NOTCH2 or NOTCH3. Interacts with MINT/SHARP. This interaction may mediate the recruitment of large corepressor complexes containing proteins such as HDAC1, HDAC2, NCOR2, SAP30, FHL1/KYOT2 and CIR1. Interacts with EP300, MAML1 and PTF1A. Interacts with RITA1/C12orf52, leading to nuclear export, prevent the interaction between RBPJ and NICD product and subsequent down-regulation of the Notch signaling pathway. Interacts with SNW1. Interacts with CHCHD2 and CXXC5. Interacts with BEND6 (via BEN domain). Interacts with NKAPL. Interacts with ZMIZ1. Interacts with RBM15. Interacts with L3MBTL3 and KDM1A; the interaction with KDM1A is weaker in the absence of L3MBTL3 and the interaction with L3MBTL3 is impaired by Notch-derived peptide containing the intracellular domain (NICD). In terms of assembly, (Microbial infection) Interacts with EBV EBNA2. Interacts with EBV EBNA3. Interacts with EBV EBNA4. Interacts with EBV EBNA6 (via N-terminus).

It is found in the nucleus. The protein resides in the cytoplasm. Transcriptional regulator that plays a central role in Notch signaling, a signaling pathway involved in cell-cell communication that regulates a broad spectrum of cell-fate determinations. Acts as a transcriptional repressor when it is not associated with Notch proteins. When associated with some NICD product of Notch proteins (Notch intracellular domain), it acts as a transcriptional activator that activates transcription of Notch target genes. Probably represses or activates transcription via the recruitment of chromatin remodeling complexes containing histone deacetylase or histone acetylase proteins, respectively. Specifically binds to the immunoglobulin kappa-type J segment recombination signal sequence. Binds specifically to methylated DNA. Binds to the oxygen responsive element of COX4I2 and activates its transcription under hypoxia conditions (4% oxygen). Negatively regulates the phagocyte oxidative burst in response to bacterial infection by repressing transcription of NADPH oxidase subunits. The chain is Recombining binding protein suppressor of hairless from Homo sapiens (Human).